We begin with the raw amino-acid sequence, 267 residues long: 2-keto-3-deoxy-L-rhamnonate aldolase (267 aa).

Catalysis depends on His49, which acts as the Proton acceptor. Residue Gln151 coordinates substrate. Glu153 provides a ligand contact to Mg(2+). Positions 178 and 179 each coordinate substrate. Asp179 is a binding site for Mg(2+).

The protein belongs to the HpcH/HpaI aldolase family. KDR aldolase subfamily. As to quaternary structure, homohexamer. Mg(2+) is required as a cofactor.

It catalyses the reaction 2-dehydro-3-deoxy-L-rhamnonate = (S)-lactaldehyde + pyruvate. Functionally, catalyzes the reversible retro-aldol cleavage of 2-keto-3-deoxy-L-rhamnonate (KDR) to pyruvate and lactaldehyde. In Klebsiella pneumoniae subsp. pneumoniae (strain ATCC 700721 / MGH 78578), this protein is 2-keto-3-deoxy-L-rhamnonate aldolase.